The primary structure comprises 312 residues: Glyoxylate/hydroxypyruvate reductase A (312 aa).

Arg-227 is an active-site residue. His-275 functions as the Proton donor in the catalytic mechanism.

The protein belongs to the D-isomer specific 2-hydroxyacid dehydrogenase family. GhrA subfamily.

Its subcellular location is the cytoplasm. The enzyme catalyses glycolate + NADP(+) = glyoxylate + NADPH + H(+). The catalysed reaction is (R)-glycerate + NAD(+) = 3-hydroxypyruvate + NADH + H(+). It carries out the reaction (R)-glycerate + NADP(+) = 3-hydroxypyruvate + NADPH + H(+). Catalyzes the NADPH-dependent reduction of glyoxylate and hydroxypyruvate into glycolate and glycerate, respectively. This is Glyoxylate/hydroxypyruvate reductase A from Citrobacter koseri (strain ATCC BAA-895 / CDC 4225-83 / SGSC4696).